The following is a 305-amino-acid chain: N-acetylmuramic acid 6-phosphate etherase (305 aa).

The SIS domain occupies 61–224; sequence ISDALAKGGR…STGAMVKLGK (164 aa). The Proton donor role is filled by glutamate 89. Glutamate 120 is an active-site residue.

The protein belongs to the GCKR-like family. MurNAc-6-P etherase subfamily. As to quaternary structure, homodimer.

It catalyses the reaction N-acetyl-D-muramate 6-phosphate + H2O = N-acetyl-D-glucosamine 6-phosphate + (R)-lactate. It functions in the pathway amino-sugar metabolism; N-acetylmuramate degradation. Its function is as follows. Specifically catalyzes the cleavage of the D-lactyl ether substituent of MurNAc 6-phosphate, producing GlcNAc 6-phosphate and D-lactate. The protein is N-acetylmuramic acid 6-phosphate etherase of Synechocystis sp. (strain ATCC 27184 / PCC 6803 / Kazusa).